A 183-amino-acid chain; its full sequence is Inosine triphosphate pyrophosphatase (183 aa).

8–13 contacts ITP; it reads TGNKNK. Residue Glu36 participates in Mg(2+) binding. ITP-binding positions include Lys48, 64–65, Lys81, 140–143, Lys161, and 166–167; these read DT, FGWD, and HR.

Belongs to the HAM1 NTPase family. In terms of assembly, homodimer. Requires Mg(2+) as cofactor. It depends on Mn(2+) as a cofactor.

The protein localises to the cytoplasm. It is found in the nucleus. The enzyme catalyses ITP + H2O = IMP + diphosphate + H(+). The catalysed reaction is dITP + H2O = dIMP + diphosphate + H(+). It carries out the reaction XTP + H2O = XMP + diphosphate + H(+). In terms of biological role, pyrophosphatase that hydrolyzes non-canonical purine nucleotides such as inosine triphosphate (ITP), deoxyinosine triphosphate (dITP) or xanthosine 5'-triphosphate (XTP) to their respective monophosphate derivatives. The enzyme does not distinguish between the deoxy- and ribose forms. Probably excludes non-canonical purines from RNA and DNA precursor pools, thus preventing their incorporation into RNA and DNA and avoiding chromosomal lesions. This is Inosine triphosphate pyrophosphatase from Emericella nidulans (strain FGSC A4 / ATCC 38163 / CBS 112.46 / NRRL 194 / M139) (Aspergillus nidulans).